The sequence spans 225 residues: 2-amino-5-formylamino-6-ribosylaminopyrimidin-4(3H)-one 5'-monophosphate deformylase (225 aa).

The Fe cation site is built by Glu-28, His-30, Asp-39, and His-107.

It belongs to the creatininase superfamily. FAPy deformylase family. In terms of assembly, homodimer. Fe(2+) serves as cofactor. The cofactor is Zn(2+).

It carries out the reaction 2-amino-5-formylamino-6-(5-phospho-D-ribosylamino)pyrimidin-4(3H)-one + H2O = 2,5-diamino-6-(1-D-ribosylamino)pyrimidin-4(3H)-one 5'-phosphate + formate + H(+). It functions in the pathway cofactor biosynthesis; coenzyme F420 biosynthesis. It participates in cofactor biosynthesis; riboflavin biosynthesis. Its function is as follows. Catalyzes the hydrolysis of the formamide of 2-amino-5-formylamino-6-ribosylamino-4(3H)-pyrimidinone 5'-monophosphate (FAPy) to form 2,5-diamino-6-ribosylamino-4(3H)-pyrimidinone 5'-phosphate (APy). The chain is 2-amino-5-formylamino-6-ribosylaminopyrimidin-4(3H)-one 5'-monophosphate deformylase from Methanocaldococcus sp. (strain FS406-22).